A 348-amino-acid chain; its full sequence is Protein RecA (348 aa).

67 to 74 (GPESSGKT) provides a ligand contact to ATP.

It belongs to the RecA family.

It localises to the cytoplasm. In terms of biological role, can catalyze the hydrolysis of ATP in the presence of single-stranded DNA, the ATP-dependent uptake of single-stranded DNA by duplex DNA, and the ATP-dependent hybridization of homologous single-stranded DNAs. It interacts with LexA causing its activation and leading to its autocatalytic cleavage. In Cutibacterium acnes (Propionibacterium acnes), this protein is Protein RecA.